The following is a 604-amino-acid chain: MKPTTPTPMKNIRNFSIIAHIDHGKSTLADCLIAECNAISNREMTSQVMDTMDIEKERGITIKAQSVRLNYTLKGEDYVLNLIDTPGHVDFSYEVSRSLCSCEGALLVVDATQGVEAQTIANTYIALDNHLEILPVINKIDLPNANVLEVKQDIEDTIGIDCSSVNEVSAKAKIGIKDLLEKIITTIPAPSGDASAPLKALIYDSWFDNYLGALALVRIMDGNINTEQEILVMGTGKKHGVLGLYYPNPLKKIPTKSLECGEIGIVSLGLKSVTDIAVGDTLTDAKNPTSKPIEGFMPAKPFVFAGIYPIETDRFEDLREALLKLQLNDCALNFEPESSVALGFGFRVGFLGLLHMEVIKERLEREFSLNLIATAPTVVYEVHLTDNSIKYVQNPSELPPENHIACIKEPFVRATIITPSEFLGNLMQLLNNKRGIQEKMEYLNQSRVMLTYSLPSNEIVMDFYDKLKSCTKGYASFDYEPIENREANLVKLDVRVAGDIVDALSIIIDKNKAYEKGRALVEAMKELIPHQLFEVAIQASVGNKIIARETIKSVGKNVTAKCYGGDITRKRKLLEKQKEGKKRMKAIGKVELPQDVFLAILKID.

The tr-type G domain maps to 10–191; the sequence is KNIRNFSIIA…KIITTIPAPS (182 aa). GTP is bound by residues 22-27 and 138-141; these read DHGKST and NKID.

Belongs to the TRAFAC class translation factor GTPase superfamily. Classic translation factor GTPase family. LepA subfamily.

It localises to the cell inner membrane. The catalysed reaction is GTP + H2O = GDP + phosphate + H(+). Its function is as follows. Required for accurate and efficient protein synthesis under certain stress conditions. May act as a fidelity factor of the translation reaction, by catalyzing a one-codon backward translocation of tRNAs on improperly translocated ribosomes. Back-translocation proceeds from a post-translocation (POST) complex to a pre-translocation (PRE) complex, thus giving elongation factor G a second chance to translocate the tRNAs correctly. Binds to ribosomes in a GTP-dependent manner. This chain is Elongation factor 4, found in Helicobacter acinonychis (strain Sheeba).